Consider the following 236-residue polypeptide: Large ribosomal subunit protein uL1 (236 aa).

This sequence belongs to the universal ribosomal protein uL1 family. Part of the 50S ribosomal subunit.

Its function is as follows. Binds directly to 23S rRNA. The L1 stalk is quite mobile in the ribosome, and is involved in E site tRNA release. Protein L1 is also a translational repressor protein, it controls the translation of the L11 operon by binding to its mRNA. The sequence is that of Large ribosomal subunit protein uL1 from Corynebacterium glutamicum (strain R).